The chain runs to 414 residues: Tryptophan synthase beta chain (414 aa).

The interval 1-26 is disordered; that stretch reads MVSTFSRQDQNYKNDDLNQPSKEGRF. The span at 10-26 shows a compositional bias: basic and acidic residues; the sequence is QNYKNDDLNQPSKEGRF. At Lys109 the chain carries N6-(pyridoxal phosphate)lysine.

Belongs to the TrpB family. In terms of assembly, tetramer of two alpha and two beta chains. It depends on pyridoxal 5'-phosphate as a cofactor.

The catalysed reaction is (1S,2R)-1-C-(indol-3-yl)glycerol 3-phosphate + L-serine = D-glyceraldehyde 3-phosphate + L-tryptophan + H2O. Its pathway is amino-acid biosynthesis; L-tryptophan biosynthesis; L-tryptophan from chorismate: step 5/5. Its function is as follows. The beta subunit is responsible for the synthesis of L-tryptophan from indole and L-serine. This Prochlorococcus marinus (strain MIT 9312) protein is Tryptophan synthase beta chain.